The following is a 463-amino-acid chain: MGPKYVFITAIIGVFWHVQGFPNPGIKQDKAVHNRELSEERPLEEQIAEADTVSRGTSKENQEMLKNDSFADELGLLMSVAEKEGDVKRSGSVRSSVGGHRGTLDDADSTKNLKPAEYFDSTKSMLDYKYEDDPDGLHQLDGTPLTAEDIVRKIATRIYEENDRGVFDKIVSKLLNLGLITESQAYTLEDEVAEVLQQLIANEAKNREKEAGDLDYAAVRSDVYDDDKQEGKMETRNKNEDRESSETKNEDSFSSKERRNELSPEEDFDDLQYFPNFNRLIKSLNSENDAKEKKTLITIMKTLIDFVKMMVKYGTITPEEGVNYLENLDAMIAVQAKNKLGKSFGSHKSILSEDKNVDESDSTKQEAAKMEKEYEALKDSTKPEPKDAEDKDKPKGKAETYLEAIRKNIEWLKEHNKEGNKGVSDNDLSKLKDFINQQADSYVEKGILDKEEANVIKRIYSSL.

The N-terminal stretch at 1 to 20 is a signal peptide; that stretch reads MGPKYVFITAIIGVFWHVQG. 3 disordered regions span residues 87–111, 225–267, and 353–398; these read VKRS…DSTK, DDDK…PEED, and EDKN…KGKA. Basic and acidic residues-rich tracts occupy residues 102–111 and 229–262; these read GTLDDADSTK and QEGK…RNEL.

In terms of assembly, interacts with CHGA. Interacts with secretogranin II/SCG2. Interacts (via C-terminus) with CPE.

The protein resides in the cytoplasmic vesicle. It localises to the secretory vesicle. It is found in the secretory vesicle membrane. Its subcellular location is the secreted. Member of the granin protein family that regulates the biogenesis of secretory granules. Acts as a sorting receptor for intragranular proteins including chromogranin A/CHGA. May also play a role in angiogenesis. Promotes endothelial proliferation, migration and tube formation through MEK/ERK signaling pathway. The chain is Secretogranin-3 (scg3) from Xenopus tropicalis (Western clawed frog).